Reading from the N-terminus, the 192-residue chain is Ion-translocating oxidoreductase complex subunit B (192 aa).

Residues 1–26 are hydrophobic; sequence MNAFWIAVAAVSLLGLAFGAILGYAS. Residues 32–91 enclose the 4Fe-4S domain; sequence EDDPVVEKIDEILPQSQCGQCGYPGCRPYAEAISCNGEKINRCAPGGEAVMLKIAELLNV. [4Fe-4S] cluster-binding residues include Cys-49, Cys-52, Cys-57, Cys-74, Cys-117, Cys-120, Cys-123, Cys-127, Cys-147, Cys-150, Cys-153, and Cys-157. 2 consecutive 4Fe-4S ferredoxin-type domains span residues 108–137 and 138–167; these read MVAV…GATR and AMHT…LQPV.

Belongs to the 4Fe4S bacterial-type ferredoxin family. RnfB subfamily. In terms of assembly, the complex is composed of six subunits: RsxA, RsxB, RsxC, RsxD, RsxE and RsxG. The cofactor is [4Fe-4S] cluster.

The protein localises to the cell inner membrane. In terms of biological role, part of a membrane-bound complex that couples electron transfer with translocation of ions across the membrane. Required to maintain the reduced state of SoxR. This Escherichia coli O6:H1 (strain CFT073 / ATCC 700928 / UPEC) protein is Ion-translocating oxidoreductase complex subunit B.